A 265-amino-acid chain; its full sequence is Hydroxyethylthiazole kinase (265 aa).

M44 contributes to the substrate binding site. ATP-binding residues include K120 and T166. Residue G193 coordinates substrate.

Belongs to the Thz kinase family. Mg(2+) serves as cofactor.

The catalysed reaction is 5-(2-hydroxyethyl)-4-methylthiazole + ATP = 4-methyl-5-(2-phosphooxyethyl)-thiazole + ADP + H(+). The protein operates within cofactor biosynthesis; thiamine diphosphate biosynthesis; 4-methyl-5-(2-phosphoethyl)-thiazole from 5-(2-hydroxyethyl)-4-methylthiazole: step 1/1. Its function is as follows. Catalyzes the phosphorylation of the hydroxyl group of 4-methyl-5-beta-hydroxyethylthiazole (THZ). The chain is Hydroxyethylthiazole kinase from Clostridium novyi (strain NT).